Reading from the N-terminus, the 305-residue chain is Fumarylacetoacetate hydrolase domain-containing protein 2 homolog (305 aa).

A divalent metal cation is bound by residues Glu141, Glu143, and Asp172.

This sequence belongs to the FAH family. The cofactor is Ca(2+). It depends on Mg(2+) as a cofactor.

In terms of biological role, may have hydrolase activity. The polypeptide is Fumarylacetoacetate hydrolase domain-containing protein 2 homolog (fahd2) (Dictyostelium discoideum (Social amoeba)).